The chain runs to 839 residues: Probable alpha-glucuronidase A (839 aa).

An N-terminal signal peptide occupies residues 1-18 (MRWSFLTVLLWLVSLTGA). Residues Asn-49, Asn-101, Asn-148, Asn-221, Asn-278, Asn-309, Asn-342, Asn-464, Asn-526, Asn-575, Asn-681, and Asn-731 are each glycosylated (N-linked (GlcNAc...) asparagine).

It belongs to the glycosyl hydrolase 67 family.

The protein resides in the secreted. It catalyses the reaction an alpha-D-glucuronoside + H2O = D-glucuronate + an alcohol. In terms of biological role, alpha-glucuronidase involved in the hydrolysis of xylan, a major structural heterogeneous polysaccharide found in plant biomass representing the second most abundant polysaccharide in the biosphere, after cellulose. Releases 4-O-methylglucuronic acid from xylan. In Aspergillus flavus (strain ATCC 200026 / FGSC A1120 / IAM 13836 / NRRL 3357 / JCM 12722 / SRRC 167), this protein is Probable alpha-glucuronidase A (aguA).